A 308-amino-acid polypeptide reads, in one-letter code: Pantothenate kinase (308 aa).

Residue 91-98 coordinates ATP; it reads GSVAVGKS.

The protein belongs to the prokaryotic pantothenate kinase family.

The protein localises to the cytoplasm. The catalysed reaction is (R)-pantothenate + ATP = (R)-4'-phosphopantothenate + ADP + H(+). Its pathway is cofactor biosynthesis; coenzyme A biosynthesis; CoA from (R)-pantothenate: step 1/5. The sequence is that of Pantothenate kinase from Lacticaseibacillus paracasei (strain ATCC 334 / BCRC 17002 / CCUG 31169 / CIP 107868 / KCTC 3260 / NRRL B-441) (Lactobacillus paracasei).